We begin with the raw amino-acid sequence, 550 residues long: Hydroxylamine reductase (550 aa).

[2Fe-2S] cluster-binding residues include Cys-3, Cys-6, Cys-18, and Cys-25. His-249, Glu-273, Cys-317, Cys-405, Cys-433, Cys-458, Glu-492, and Lys-494 together coordinate hybrid [4Fe-2O-2S] cluster. Cys-405 carries the cysteine persulfide modification.

The protein belongs to the HCP family. [2Fe-2S] cluster is required as a cofactor. The cofactor is hybrid [4Fe-2O-2S] cluster.

Its subcellular location is the cytoplasm. It catalyses the reaction A + NH4(+) + H2O = hydroxylamine + AH2 + H(+). Functionally, catalyzes the reduction of hydroxylamine to form NH(3) and H(2)O. The sequence is that of Hydroxylamine reductase from Yersinia pseudotuberculosis serotype IB (strain PB1/+).